The sequence spans 311 residues: Methionyl-tRNA formyltransferase (311 aa).

Residue 110-113 (SLLP) coordinates (6S)-5,6,7,8-tetrahydrofolate.

It belongs to the Fmt family.

The catalysed reaction is L-methionyl-tRNA(fMet) + (6R)-10-formyltetrahydrofolate = N-formyl-L-methionyl-tRNA(fMet) + (6S)-5,6,7,8-tetrahydrofolate + H(+). Attaches a formyl group to the free amino group of methionyl-tRNA(fMet). The formyl group appears to play a dual role in the initiator identity of N-formylmethionyl-tRNA by promoting its recognition by IF2 and preventing the misappropriation of this tRNA by the elongation apparatus. The polypeptide is Methionyl-tRNA formyltransferase (Streptococcus mutans serotype c (strain ATCC 700610 / UA159)).